Consider the following 942-residue polypeptide: MYLSRIPGGAALAALLVALLLCCNFPPSIAGIEYSDVLPDSFPSAPAESLPHFLLEPEDAYIVKNKAVELVCKANPATQIYFKCNGEWVNQNDHITKERVDDVTGLVVREVQIEVSRQQVEELFGLEDFWCQCVAWSSAGTTKSKRSYVRIAYLRKNFDQEPLGKEVALEQEALLQCRPPEGVPPAEVEWLKNEEIIDSTKDTNFLITIDHNLIIKQARLSDTANYTCVAKNIVAKRRSTTATVIVFVNGGWSSWTEWSPCNNRCGHGWQKRTRTCTNPAPLNGGTMCEGQQYQKFACNTMCPVDGGWTEWSKWSACSTECTHWRSRECNAPTPKNGGKDCSGMLLDSKNCTDGLCMQNKRVLGETKSHLLESTGDVALYAGLVVAIFIIIILLMAVGIVVYRRNCREFDTDITDSSAALTGGFHPVNFKTSRHDNSHLIHPAMQPDLTANAGIYRGHMYALQDSADKIPMTNSPLLDPLPNLKIKVYNSSTVGSSPGIHDGNDLLGAKPTGTYPSDNIMNARNKNMSTQHLLTLPRDSSNSVTGTFGSLGGRLTFPNTGVSLLIPQGAIPQGKYYEMYLMINKRENTVLPSEGTQTILSPIITCGPTGLLLCKPVILTVPHCADITTSDWILQLKTQSHQGNWEEVVTLNEETLNTPCYCQLESHSCHILLDQLGTYAFVGESYSRSAIKRLQLAIFAPMLCTSLEYNLKVYCVEDTPDALKEVLELEKTLGGYLIEEPKPLMFKDSYHNLRLSIHDIPHSLWRSKLLAKYQEIPFYHVWSGSQRTLHCTFTLERYSLAATELTCKICVRQVEGEGQIFQLHTSLEENVKSFDPFCSHAENSVTTQLGPYAFKIPFLIRQKICNSLDAPNSRGNDWRLLAQKLCMDRYLNYFATKASPTGVILDLWEALHQDDGDLNTLASALEEMGKSEMMLVMATDGDC.

The N-terminal stretch at 1–30 (MYLSRIPGGAALAALLVALLLCCNFPPSIA) is a signal peptide. Topologically, residues 31–380 (GIEYSDVLPD…LESTGDVALY (350 aa)) are extracellular. Positions 51 to 148 (PHFLLEPEDA…AGTTKSKRSY (98 aa)) constitute an Ig-like domain. Cystine bridges form between Cys-72–Cys-133, Cys-84–Cys-131, Cys-177–Cys-228, Cys-261–Cys-298, Cys-265–Cys-302, Cys-276–Cys-288, Cys-317–Cys-351, Cys-321–Cys-356, and Cys-329–Cys-341. In terms of domain architecture, Ig-like C2-type spans 150 to 245 (RIAYLRKNFD…KRRSTTATVI (96 aa)). N-linked (GlcNAc...) asparagine glycosylation occurs at Asn-225. 2 consecutive TSP type-1 domains span residues 249–303 (NGGW…TMCP) and 305–357 (DGGW…GLCM). The N-linked (GlcNAc...) asparagine glycan is linked to Asn-350. Residues 381–401 (AGLVVAIFIIIILLMAVGIVV) form a helical membrane-spanning segment. Topologically, residues 402–942 (YRRNCREFDT…MLVMATDGDC (541 aa)) are cytoplasmic. The ZU5 domain maps to 541-684 (NSVTGTFGSL…LGTYAFVGES (144 aa)). The UPA domain stretch occupies residues 687–835 (RSAIKRLQLA…LEENVKSFDP (149 aa)). The 78-residue stretch at 863-940 (ICNSLDAPNS…EMMLVMATDG (78 aa)) folds into the Death domain.

This sequence belongs to the unc-5 family. Interacts (via extracellular domain) with flrt3 (via extracellular domain). Interacts with rnd1.

The protein localises to the cell membrane. Its function is as follows. Plays a role in cell-cell adhesion during embryonic development. Receptor for netrin required for axon guidance. Mediates axon repulsion of neuronal growth cones in the developing nervous system upon ligand binding. The sequence is that of Netrin receptor UNC5B-b from Xenopus laevis (African clawed frog).